We begin with the raw amino-acid sequence, 179 residues long: MSTGSLSDVEDLQEVEMLDCDSLKVDSNKEFGTSNESTEEGSNCENGSPQKGRGGLGKRRKAPTKKSPLSGVSQEGKQVQRNAANARERARMRVLSKAFSRLKTTLPWVPPDTKLSKLDTLRLASSYIAHLRQILANDKYENGYIHPVNLTWPFMVAGKPENDLKEVVTANRLCGTTAS.

The tract at residues 19–88 (DCDSLKVDSN…VQRNAANARE (70 aa)) is disordered. 2 stretches are compositionally biased toward polar residues: residues 30 to 49 (EFGT…NGSP) and 70 to 80 (SGVSQEGKQVQ). The bHLH domain maps to 79–131 (VQRNAANARERARMRVLSKAFSRLKTTLPWVPPDTKLSKLDTLRLASSYIAHL).

As to quaternary structure, efficient DNA binding requires dimerization with another bHLH protein. Forms a heterodimer with TCF3 and binds the E box (5'-CANNTG-3'). Expressed at high levels in lung, kidney, gut, heart, ovary and podocytes (visceral glomerular epithelial cells). Also found in spleen, large intestine, uterus, bladder and testis.

The protein resides in the nucleus. In terms of biological role, involved in epithelial-mesenchymal interactions in kidney and lung morphogenesis that include epithelial differentiation and branching morphogenesis. May be involved in the organogenesis of the spleen and heart and in cardiac and coronary artery development. May function in the development and sex differentiation of gonad via transcriptional regulation of AD4BP/SF-1. This chain is Transcription factor 21 (Tcf21), found in Mus musculus (Mouse).